The chain runs to 560 residues: 2-succinyl-5-enolpyruvyl-6-hydroxy-3-cyclohexene-1-carboxylate synthase (560 aa).

This sequence belongs to the TPP enzyme family. MenD subfamily. Homodimer. Mg(2+) is required as a cofactor. Requires Mn(2+) as cofactor. Thiamine diphosphate serves as cofactor.

The enzyme catalyses isochorismate + 2-oxoglutarate + H(+) = 5-enolpyruvoyl-6-hydroxy-2-succinyl-cyclohex-3-ene-1-carboxylate + CO2. Its pathway is quinol/quinone metabolism; 1,4-dihydroxy-2-naphthoate biosynthesis; 1,4-dihydroxy-2-naphthoate from chorismate: step 2/7. It functions in the pathway quinol/quinone metabolism; menaquinone biosynthesis. Its function is as follows. Catalyzes the thiamine diphosphate-dependent decarboxylation of 2-oxoglutarate and the subsequent addition of the resulting succinic semialdehyde-thiamine pyrophosphate anion to isochorismate to yield 2-succinyl-5-enolpyruvyl-6-hydroxy-3-cyclohexene-1-carboxylate (SEPHCHC). The protein is 2-succinyl-5-enolpyruvyl-6-hydroxy-3-cyclohexene-1-carboxylate synthase of Pectobacterium atrosepticum (strain SCRI 1043 / ATCC BAA-672) (Erwinia carotovora subsp. atroseptica).